The chain runs to 396 residues: MAKAKFERNKPHCNIGTIGHVDHGKTSLTAAITKVLAETGGATFTAYDQIDKAPEEKARGITISTAHVEYETANRHYAHVDCPGHADYVKNMITGAAQMDGAILVVSAADGPMPQTREHILLARQVGVPALVVFLNKCDMVDDPELLELVEMEVRELLSKYDFPGDDIPIVKGSALAALENKDPKLGHDAILELMKAVDAYIPQPERPIDQPFLMPVEDVFSISGRGTVVTGRVERGIVKVGEEIEIVGLRDTQKTIVTGVEMFRKLLDQGQAGDNIGALLRGTKREEVERGQVLCKPGSVKPHTKFKAEAYILTKEEGGRHTPFFTNYRPQFYFRTTDVTGVVHLPEGTEMVMPGDNIAMEVHLIVPIAMEEKLRFAIREGGRTVGAGVVASIIE.

The region spanning 10–206 (KPHCNIGTIG…AVDAYIPQPE (197 aa)) is the tr-type G domain. The tract at residues 19–26 (GHVDHGKT) is G1. GTP is bound at residue 19–26 (GHVDHGKT). A Mg(2+)-binding site is contributed by T26. Residues 60–64 (GITIS) are G2. The segment at 81 to 84 (DCPG) is G3. Residues 81-85 (DCPGH) and 136-139 (NKCD) each bind GTP. Residues 136–139 (NKCD) form a G4 region. A G5 region spans residues 174-176 (SAL).

Belongs to the TRAFAC class translation factor GTPase superfamily. Classic translation factor GTPase family. EF-Tu/EF-1A subfamily. In terms of assembly, monomer.

The protein localises to the cytoplasm. It catalyses the reaction GTP + H2O = GDP + phosphate + H(+). Functionally, GTP hydrolase that promotes the GTP-dependent binding of aminoacyl-tRNA to the A-site of ribosomes during protein biosynthesis. The polypeptide is Elongation factor Tu (Rhodopseudomonas palustris (strain BisB18)).